The primary structure comprises 320 residues: Alpha/beta hydrolase domain-containing protein 17C (320 aa).

Positions 50-75 (RAPAPAATPAPAPAAQPAPAEEGAGP) are disordered. Pro residues predominate over residues 55–65 (AATPAPAPAAQ). Active-site charge relay system residues include S202, D267, and H296.

Belongs to the AB hydrolase superfamily. ABHD17 family. Post-translationally, palmitoylated on cysteine residues located in a cysteine cluster at the N-terminus which promotes membrane localization. Palmitoylation is required for post-synaptic localization and for depalmitoylating activity towards DLG4/PSD95.

It localises to the recycling endosome membrane. It is found in the cell projection. Its subcellular location is the dendritic spine. The protein localises to the postsynaptic density membrane. The catalysed reaction is S-hexadecanoyl-L-cysteinyl-[protein] + H2O = L-cysteinyl-[protein] + hexadecanoate + H(+). Its function is as follows. Hydrolyzes fatty acids from S-acylated cysteine residues in proteins. Has depalmitoylating activity towards DLG4/PSD95. This Mus musculus (Mouse) protein is Alpha/beta hydrolase domain-containing protein 17C.